A 372-amino-acid polypeptide reads, in one-letter code: MLEKYISIKMRVNPVNNTINNTDDIKSTSLFPKKKNVFFIEGGGTKGVYAMGVLNYLYDENVYIKLQDVDIFGGTSVGSILAVGLSLGYQKKDFEKFVETFDLSKFVDSKYYAPFTLYRFLTKGHLYDDTNRQTLVKKILNINIETIRSHLDLPIDSDFEGTDITFWHLKKLIKKYPQIYKHLLINSVDISREQQIFMTTLDDNWDNIKLYDSILASSAFPFVFPSSKFYYNSTTQKYQYESLTDTNDKITENSFIDGGVANNIPLDYLILNSERFTDCNLWSLQFTTTPAYSKITGPIALIQKLINFAFSYGRKSFGLELIHEKYQVNVINLNLSANTFDTYNNNQIKEITRQIYDQCLSGQLHFDNVDSQ.

A PNPLA domain is found at 38–270 (FFIEGGGTKG…ANNIPLDYLI (233 aa)). A GXGXXG motif is present at residues 42–47 (GGGTKG). The GXSXG signature appears at 74–78 (GTSVG). S76 functions as the Nucleophile in the catalytic mechanism. The active-site Proton acceptor is the D257. A DGA/G motif is present at residues 257 to 259 (DGG).

Its function is as follows. Probable lipid hydrolase. This is an uncharacterized protein from Acanthamoeba polyphaga (Amoeba).